A 226-amino-acid polypeptide reads, in one-letter code: 2-C-methyl-D-erythritol 4-phosphate cytidylyltransferase (226 aa).

The protein belongs to the IspD/TarI cytidylyltransferase family. IspD subfamily.

The enzyme catalyses 2-C-methyl-D-erythritol 4-phosphate + CTP + H(+) = 4-CDP-2-C-methyl-D-erythritol + diphosphate. It participates in isoprenoid biosynthesis; isopentenyl diphosphate biosynthesis via DXP pathway; isopentenyl diphosphate from 1-deoxy-D-xylulose 5-phosphate: step 2/6. Its function is as follows. Catalyzes the formation of 4-diphosphocytidyl-2-C-methyl-D-erythritol from CTP and 2-C-methyl-D-erythritol 4-phosphate (MEP). This chain is 2-C-methyl-D-erythritol 4-phosphate cytidylyltransferase, found in Actinobacillus pleuropneumoniae serotype 7 (strain AP76).